The chain runs to 508 residues: Protein FAM217A (508 aa).

It belongs to the FAM217 family.

The chain is Protein FAM217A (FAM217A) from Homo sapiens (Human).